The following is a 117-amino-acid chain: Large ribosomal subunit protein bL20c (117 aa).

It belongs to the bacterial ribosomal protein bL20 family.

It localises to the plastid. It is found in the chloroplast. Binds directly to 23S ribosomal RNA and is necessary for the in vitro assembly process of the 50S ribosomal subunit. It is not involved in the protein synthesizing functions of that subunit. This Chloranthus spicatus (Chulantree) protein is Large ribosomal subunit protein bL20c.